Consider the following 70-residue polypeptide: ATP synthase subunit c (70 aa).

2 helical membrane-spanning segments follow: residues 4–24 (IAAG…DGIV) and 47–67 (FIGV…SLLV).

This sequence belongs to the ATPase C chain family. As to quaternary structure, F-type ATPases have 2 components, F(1) - the catalytic core - and F(0) - the membrane proton channel. F(1) has five subunits: alpha(3), beta(3), gamma(1), delta(1), epsilon(1). F(0) has three main subunits: a(1), b(2) and c(10-14). The alpha and beta chains form an alternating ring which encloses part of the gamma chain. F(1) is attached to F(0) by a central stalk formed by the gamma and epsilon chains, while a peripheral stalk is formed by the delta and b chains.

Its subcellular location is the cell membrane. In terms of biological role, f(1)F(0) ATP synthase produces ATP from ADP in the presence of a proton or sodium gradient. F-type ATPases consist of two structural domains, F(1) containing the extramembraneous catalytic core and F(0) containing the membrane proton channel, linked together by a central stalk and a peripheral stalk. During catalysis, ATP synthesis in the catalytic domain of F(1) is coupled via a rotary mechanism of the central stalk subunits to proton translocation. Key component of the F(0) channel; it plays a direct role in translocation across the membrane. A homomeric c-ring of between 10-14 subunits forms the central stalk rotor element with the F(1) delta and epsilon subunits. The protein is ATP synthase subunit c of Pediococcus pentosaceus (strain ATCC 25745 / CCUG 21536 / LMG 10740 / 183-1w).